We begin with the raw amino-acid sequence, 303 residues long: Methionyl-tRNA formyltransferase (303 aa).

111-114 provides a ligand contact to (6S)-5,6,7,8-tetrahydrofolate; that stretch reads SLLP.

The protein belongs to the Fmt family.

It carries out the reaction L-methionyl-tRNA(fMet) + (6R)-10-formyltetrahydrofolate = N-formyl-L-methionyl-tRNA(fMet) + (6S)-5,6,7,8-tetrahydrofolate + H(+). Attaches a formyl group to the free amino group of methionyl-tRNA(fMet). The formyl group appears to play a dual role in the initiator identity of N-formylmethionyl-tRNA by promoting its recognition by IF2 and preventing the misappropriation of this tRNA by the elongation apparatus. The chain is Methionyl-tRNA formyltransferase from Ehrlichia chaffeensis (strain ATCC CRL-10679 / Arkansas).